Here is a 240-residue protein sequence, read N- to C-terminus: L-isoleucine-4-hydroxylase (240 aa).

Fe cation is bound by residues histidine 159, aspartate 161, and histidine 212.

This sequence belongs to the iron/ascorbate-dependent oxidoreductase family. It depends on L-ascorbate as a cofactor. Fe(2+) serves as cofactor.

The enzyme catalyses L-isoleucine + 2-oxoglutarate + O2 = (4S)-4-hydroxy-L-isoleucine + succinate + CO2. Functionally, catalyzes the hydroxylation of L-isoleucine to produce (4S)-4-hydroxy-L-isoleucine. Can also catalyze the hydroxylation of L-leucine, L-norvaline, L-norleucine and L-allo-isoleucine, as well as the sulfoxidation of L-methionine, L-ethionine, S-methyl-L-cysteine, S-ethyl-L-cysteine, and S-allyl-L-cysteine. The protein is L-isoleucine-4-hydroxylase of Bacillus thuringiensis.